We begin with the raw amino-acid sequence, 579 residues long: Moesin a (579 aa).

An FERM domain is found at 5–295 (ISVRVTTMDA…GNHELYMRRR (291 aa)). Positions 306–448 (KAQAKEEKNH…EDEALEWQTK (143 aa)) form a coiled coil. Disordered regions lie at residues 308–341 (QAKE…EKIE), 376–418 (EQER…EHLA), and 464–519 (KNKV…KNER). Positions 376–400 (EQERKRAQEEAERLERERRLAEEAK) are enriched in basic and acidic residues. The span at 490–501 (AEASAELTSAAA) shows a compositional bias: low complexity. The segment covering 502 to 519 (YKDRSEEERMTEAEKNER) has biased composition (basic and acidic residues). Positions 517 to 551 (NERVQKHLLALTSELANARDETKKTQNDIIHAENV) form a coiled coil.

Its subcellular location is the cell membrane. The protein localises to the cell junction. Positively regulates endothelial adherens junction formation and stabilization. Is thereby required for intersegmental vessel luminal membrane formation and stabilization during tubulogenesis in the early stages of development, independent of blood flow dynamics. The protein is Moesin a of Danio rerio (Zebrafish).